We begin with the raw amino-acid sequence, 307 residues long: tRNA dimethylallyltransferase (307 aa).

Gly9 to Thr16 provides a ligand contact to ATP. Thr11–Thr16 lines the substrate pocket. The segment at Asp34 to Gln37 is interaction with substrate tRNA.

This sequence belongs to the IPP transferase family. In terms of assembly, monomer. Mg(2+) serves as cofactor.

It carries out the reaction adenosine(37) in tRNA + dimethylallyl diphosphate = N(6)-dimethylallyladenosine(37) in tRNA + diphosphate. In terms of biological role, catalyzes the transfer of a dimethylallyl group onto the adenine at position 37 in tRNAs that read codons beginning with uridine, leading to the formation of N6-(dimethylallyl)adenosine (i(6)A). The polypeptide is tRNA dimethylallyltransferase (Limosilactobacillus reuteri (strain DSM 20016) (Lactobacillus reuteri)).